We begin with the raw amino-acid sequence, 194 residues long: uncharacterized protein (194 aa).

It belongs to the mimivirus R457/R459 family.

The protein resides in the virion. This is an uncharacterized protein from Acanthamoeba polyphaga mimivirus (APMV).